The sequence spans 104 residues: Large ribosomal subunit protein bL21 (104 aa).

The protein belongs to the bacterial ribosomal protein bL21 family. In terms of assembly, part of the 50S ribosomal subunit. Contacts protein L20.

Functionally, this protein binds to 23S rRNA in the presence of protein L20. The chain is Large ribosomal subunit protein bL21 from Lactococcus lactis subsp. lactis (strain IL1403) (Streptococcus lactis).